We begin with the raw amino-acid sequence, 339 residues long: Dihydroorotate dehydrogenase (quinone) (339 aa).

Residues 64 to 68 (AGADK) and Thr88 contribute to the FMN site. Position 68 (Lys68) interacts with substrate. 113–117 (NRNGF) lines the substrate pocket. FMN contacts are provided by Asn141 and Asn174. Asn174 is a binding site for substrate. Residue Ser177 is the Nucleophile of the active site. Asn179 is a substrate binding site. The FMN site is built by Lys219 and Thr247. 248–249 (NT) provides a ligand contact to substrate. Residues Gly270, Gly299, and 320-321 (YS) each bind FMN.

The protein belongs to the dihydroorotate dehydrogenase family. Type 2 subfamily. As to quaternary structure, monomer. Requires FMN as cofactor.

The protein resides in the cell membrane. The catalysed reaction is (S)-dihydroorotate + a quinone = orotate + a quinol. It functions in the pathway pyrimidine metabolism; UMP biosynthesis via de novo pathway; orotate from (S)-dihydroorotate (quinone route): step 1/1. Its function is as follows. Catalyzes the conversion of dihydroorotate to orotate with quinone as electron acceptor. In Haemophilus influenzae (strain 86-028NP), this protein is Dihydroorotate dehydrogenase (quinone).